The primary structure comprises 735 residues: uncharacterized protein (735 aa).

A GAF domain is found at Asp-25–Leu-175. In terms of domain architecture, PAS spans Ser-185–Thr-255. The region spanning Arg-263–Arg-313 is the PAC domain. The region spanning Gly-342–His-464 is the GGDEF domain. The EAL domain maps to Arg-472–Ala-732.

This is an uncharacterized protein from Azorhizobium caulinodans (strain ATCC 43989 / DSM 5975 / JCM 20966 / LMG 6465 / NBRC 14845 / NCIMB 13405 / ORS 571).